Here is a 404-residue protein sequence, read N- to C-terminus: Tryptophan synthase beta chain (404 aa).

An N6-(pyridoxal phosphate)lysine modification is found at K95.

Belongs to the TrpB family. In terms of assembly, tetramer of two alpha and two beta chains. Pyridoxal 5'-phosphate is required as a cofactor.

It carries out the reaction (1S,2R)-1-C-(indol-3-yl)glycerol 3-phosphate + L-serine = D-glyceraldehyde 3-phosphate + L-tryptophan + H2O. The protein operates within amino-acid biosynthesis; L-tryptophan biosynthesis; L-tryptophan from chorismate: step 5/5. In terms of biological role, the beta subunit is responsible for the synthesis of L-tryptophan from indole and L-serine. The polypeptide is Tryptophan synthase beta chain (trpB) (Thermus thermophilus (strain ATCC BAA-163 / DSM 7039 / HB27)).